We begin with the raw amino-acid sequence, 408 residues long: Peptidase T (408 aa).

A Zn(2+)-binding site is contributed by His78. Residue Asp80 is part of the active site. Asp140 is a Zn(2+) binding site. The Proton acceptor role is filled by Glu174. 3 residues coordinate Zn(2+): Glu175, Asp197, and His379.

Belongs to the peptidase M20B family. Zn(2+) is required as a cofactor.

The protein localises to the cytoplasm. It carries out the reaction Release of the N-terminal residue from a tripeptide.. In terms of biological role, cleaves the N-terminal amino acid of tripeptides. This Staphylococcus aureus (strain Mu3 / ATCC 700698) protein is Peptidase T.